A 626-amino-acid polypeptide reads, in one-letter code: DNA mismatch repair protein MutL (626 aa).

Residues glutamate 377–glycine 413 are disordered. Polar residues predominate over residues lysine 383–threonine 393.

Belongs to the DNA mismatch repair MutL/HexB family.

This protein is involved in the repair of mismatches in DNA. It is required for dam-dependent methyl-directed DNA mismatch repair. May act as a 'molecular matchmaker', a protein that promotes the formation of a stable complex between two or more DNA-binding proteins in an ATP-dependent manner without itself being part of a final effector complex. This Bacillus anthracis (strain A0248) protein is DNA mismatch repair protein MutL.